The following is a 387-amino-acid chain: Protein RecA (387 aa).

78-85 (GPESSGKT) contacts ATP. The span at 350 to 369 (QTREVKSIERDPKETKETKS) shows a compositional bias: basic and acidic residues. The interval 350 to 387 (QTREVKSIERDPKETKETKSKQPVSFSTEAEVDIAVGE) is disordered.

Belongs to the RecA family.

Its subcellular location is the cytoplasm. Functionally, can catalyze the hydrolysis of ATP in the presence of single-stranded DNA, the ATP-dependent uptake of single-stranded DNA by duplex DNA, and the ATP-dependent hybridization of homologous single-stranded DNAs. It interacts with LexA causing its activation and leading to its autocatalytic cleavage. This chain is Protein RecA, found in Leptospira meyeri.